We begin with the raw amino-acid sequence, 477 residues long: Shikimate biosynthesis protein AroDE (477 aa).

The segment at 1-209 (MLCATVSGPS…LEELLSYNYS (209 aa)) is 3-dehydroquinate dehydratase. Residues S21, 29-31 (ELR), and 56-58 (TFR) each bind 3-dehydroquinate. The active-site Proton donor/acceptor; for 3-dehydroquinate dehydratase activity is H111. The active-site Schiff-base intermediate with substrate; for 3-dehydroquinate dehydratase activity is the K134. 2 residues coordinate 3-dehydroquinate: R172 and Q197. The shikimate 5-dehydrogenase stretch occupies residues 210–477 (KLSEKSHIYG…NYVKNFMAKV (268 aa)). 228–230 (SIS) contributes to the shikimate binding site. Catalysis depends on K279, which acts as the Proton acceptor; for shikimate dehydrogenase activity. The shikimate site is built by N300 and D315. Residues 339-343 (GAGGA), 362-364 (NRT), and G438 each bind NADP(+). Residue Q445 participates in shikimate binding.

It in the N-terminal section; belongs to the type-I 3-dehydroquinase family. The protein in the C-terminal section; belongs to the shikimate dehydrogenase family.

The enzyme catalyses 3-dehydroquinate = 3-dehydroshikimate + H2O. The catalysed reaction is shikimate + NADP(+) = 3-dehydroshikimate + NADPH + H(+). The protein operates within metabolic intermediate biosynthesis; chorismate biosynthesis; chorismate from D-erythrose 4-phosphate and phosphoenolpyruvate: step 3/7. Its pathway is metabolic intermediate biosynthesis; chorismate biosynthesis; chorismate from D-erythrose 4-phosphate and phosphoenolpyruvate: step 4/7. Functionally, bifunctional enzyme that catalyzes two sequential steps of the aromatic amino acids biosynthetic pathway. In the first reaction, the AroD domain catalyzes the cis-dehydration of 3-dehydroquinate (DHQ) and introduces the first double bond of the aromatic ring to yield 3-dehydroshikimate; in the second reaction, the AroE domain catalyzes the reversible NADPH linked reduction of 3-dehydroshikimate (DHSA) to yield shikimate (SA). The sequence is that of Shikimate biosynthesis protein AroDE from Chlamydia pneumoniae (Chlamydophila pneumoniae).